The following is a 376-amino-acid chain: MSKRDFYEVLGVGRDASEREVKKAYKRLAMKFHPDRNPGDKEAEASFKEVKEAYEILTDSDKKAAYDQFGHAGVDPNRGGGGHGGADFGDVFGDVFGDIFGGGRRGGGQRQAARGSDLRYNLELSLEEAVKGLSKELRIPTLVACEPCDGSGAKKGSKPTTCGTCHGQGQVQMRQGFFAVQQACPTCHGRGKIIKDPCNKCHGEGRVEKSKTLSVKIPAGVDTGDRIRLSGEGEAGEFGAPPGDLYVQVSVREHAIFQRDGNNLYCEVPISFSKAALGGEIEVPTLDGKVNLKIPTETQTGRMFRMRGKGVKSVRSHAVGDLLCKVVMETPVNLNERQKELLREFEETLTGQSKKHSPKAEGFFDGVKKFFQDLNS.

A J domain is found at 5–70; sequence DFYEVLGVGR…DKKAAYDQFG (66 aa). A CR-type zinc finger spans residues 132–210; the sequence is GLSKELRIPT…CHGEGRVEKS (79 aa). Zn(2+) is bound by residues Cys145, Cys148, Cys162, Cys165, Cys184, Cys187, Cys198, and Cys201. CXXCXGXG motif repeat units lie at residues 145–152, 162–169, 184–191, and 198–205; these read CEPCDGSG, CGTCHGQG, CPTCHGRG, and CNKCHGEG.

This sequence belongs to the DnaJ family. Homodimer. Zn(2+) is required as a cofactor.

The protein resides in the cytoplasm. Participates actively in the response to hyperosmotic and heat shock by preventing the aggregation of stress-denatured proteins and by disaggregating proteins, also in an autonomous, DnaK-independent fashion. Unfolded proteins bind initially to DnaJ; upon interaction with the DnaJ-bound protein, DnaK hydrolyzes its bound ATP, resulting in the formation of a stable complex. GrpE releases ADP from DnaK; ATP binding to DnaK triggers the release of the substrate protein, thus completing the reaction cycle. Several rounds of ATP-dependent interactions between DnaJ, DnaK and GrpE are required for fully efficient folding. Also involved, together with DnaK and GrpE, in the DNA replication of plasmids through activation of initiation proteins. This chain is Chaperone protein DnaJ, found in Shewanella piezotolerans (strain WP3 / JCM 13877).